A 153-amino-acid polypeptide reads, in one-letter code: Endoribonuclease YbeY (153 aa).

Zn(2+) contacts are provided by histidine 118, histidine 122, and histidine 128.

The protein belongs to the endoribonuclease YbeY family. It depends on Zn(2+) as a cofactor.

The protein resides in the cytoplasm. In terms of biological role, single strand-specific metallo-endoribonuclease involved in late-stage 70S ribosome quality control and in maturation of the 3' terminus of the 16S rRNA. This Staphylococcus carnosus (strain TM300) protein is Endoribonuclease YbeY.